The primary structure comprises 498 residues: Capsanthin/capsorubin synthase, chromoplastic (498 aa).

The N-terminal 52 residues, 1–52 (METLLKPFPSPLLSIPTPNMYSFKHNSTFPNPTKQKDSRKFHYRNKSSTHFC), are a transit peptide targeting the chromoplast. 84–112 (VIIIGTGPAGLRLAEQVSKYGIKVCCVDP) contacts NAD(+). Positions 293 to 297 (FLEET) match the FLEET motif motif.

This sequence belongs to the lycopene cyclase family. Monomer. FAD is required as a cofactor. NADPH serves as cofactor.

It localises to the plastid. It is found in the chromoplast. The catalysed reaction is all-trans-violaxanthin = all-trans-capsorubin. It catalyses the reaction all-trans-antheraxanthin = all-trans-capsanthin. It carries out the reaction all-trans-violaxanthin = (5R,6S)-5,6-epoxi-capsanthin. The enzyme catalyses (5R,6S)-5,6-epoxi-capsanthin = all-trans-capsorubin. It participates in carotenoid biosynthesis; capsanthin biosynthesis; capsanthin from antheraxanthin: step 1/1. It functions in the pathway carotenoid biosynthesis; capsorubin biosynthesis; capsorubin from violaxanthin: step 1/1. Its function is as follows. Catalyzes the conversion of the ubiquitous 5,6-epoxycarotenoids, antheraxanthin and violaxanthin, into capsanthin and capsorubin, respectively. This Capsicum annuum (Capsicum pepper) protein is Capsanthin/capsorubin synthase, chromoplastic.